Reading from the N-terminus, the 363-residue chain is NAD(P)H-quinone oxidoreductase subunit 1, chloroplastic (363 aa).

7 helical membrane-spanning segments follow: residues 26–46, 98–118, 127–147, 246–266, 268–288, 300–320, and 336–356; these read IIWI…GVLV, FSIG…VIPF, LTIG…GLLM, TEYS…NLLV, SLFV…YIFV, VFGP…FLFI, and LLNL…LLTT.

It belongs to the complex I subunit 1 family. In terms of assembly, NDH is composed of at least 16 different subunits, 5 of which are encoded in the nucleus.

It localises to the plastid. The protein resides in the chloroplast thylakoid membrane. It catalyses the reaction a plastoquinone + NADH + (n+1) H(+)(in) = a plastoquinol + NAD(+) + n H(+)(out). It carries out the reaction a plastoquinone + NADPH + (n+1) H(+)(in) = a plastoquinol + NADP(+) + n H(+)(out). NDH shuttles electrons from NAD(P)H:plastoquinone, via FMN and iron-sulfur (Fe-S) centers, to quinones in the photosynthetic chain and possibly in a chloroplast respiratory chain. The immediate electron acceptor for the enzyme in this species is believed to be plastoquinone. Couples the redox reaction to proton translocation, and thus conserves the redox energy in a proton gradient. The sequence is that of NAD(P)H-quinone oxidoreductase subunit 1, chloroplastic from Coffea arabica (Arabian coffee).